Reading from the N-terminus, the 155-residue chain is Histone H2B.4 (155 aa).

A compositionally biased stretch (basic and acidic residues) spans 1–28 (MAPKTKEEKPASEAVEPKAEAKPKAEKA). The disordered stretch occupies residues 1-62 (MAPKTKEEKP…GDKKKKKAKV (62 aa)). Residues 29–40 (PKKKEKKAPAKK) are compositionally biased toward basic residues. A Glycyl lysine isopeptide (Lys-Gly) (interchain with G-Cter in ubiquitin) cross-link involves residue Lys-151.

The protein belongs to the histone H2B family. In terms of assembly, the nucleosome is a histone octamer containing two molecules each of H2A, H2B, H3 and H4 assembled in one H3-H4 heterotetramer and two H2A-H2B heterodimers. The octamer wraps approximately 147 bp of DNA. Post-translationally, monoubiquitinated to form H2BK143ub1; may give a specific tag for epigenetic transcriptional activation.

It localises to the nucleus. It is found in the chromosome. Its function is as follows. Core component of nucleosome. Nucleosomes wrap and compact DNA into chromatin, limiting DNA accessibility to the cellular machineries which require DNA as a template. Histones thereby play a central role in transcription regulation, DNA repair, DNA replication and chromosomal stability. DNA accessibility is regulated via a complex set of post-translational modifications of histones, also called histone code, and nucleosome remodeling. The sequence is that of Histone H2B.4 from Volvox carteri (Green alga).